Here is a 264-residue protein sequence, read N- to C-terminus: N-carbamoylsarcosine amidase (264 aa).

Cysteine 177 serves as the catalytic Nucleophile. Positions 240–264 (TVPKTLSDPQPEVEAPADPVFAEQH) are disordered.

Homotetramer. Sulfate is required as a cofactor.

It carries out the reaction N-carbamoylsarcosine + H2O + 2 H(+) = sarcosine + NH4(+) + CO2. It participates in amine and polyamine degradation; creatinine degradation; sarcosine from creatinine: step 3/3. The protein is N-carbamoylsarcosine amidase of Arthrobacter sp.